A 113-amino-acid chain; its full sequence is Large ribosomal subunit protein eL34 (113 aa).

This sequence belongs to the eukaryotic ribosomal protein eL34 family.

This Methanopyrus kandleri (strain AV19 / DSM 6324 / JCM 9639 / NBRC 100938) protein is Large ribosomal subunit protein eL34.